The chain runs to 378 residues: 7-methylxanthine methyltransferase 1 (378 aa).

Tyr18, Cys61, Asn66, Asp100, Leu101, Ser139, Phe140, and Cys156 together coordinate S-adenosyl-L-homocysteine. 3 residues coordinate theobromine: Tyr157, His160, and Trp161. 4 residues coordinate Mg(2+): Asn178, Asp260, Phe262, and Asn263. Tyr362 lines the theobromine pocket.

This sequence belongs to the methyltransferase superfamily. Type-7 methyltransferase family. Requires Mg(2+) as cofactor. As to expression, mainly expressed, at low levels, in leaves and fruits (grains). Also present, at lower levels, in roots, stamens and pistils.

The protein resides in the cytoplasm. It carries out the reaction 7-methylxanthine + S-adenosyl-L-methionine = theobromine + S-adenosyl-L-homocysteine + H(+). The protein operates within alkaloid biosynthesis. Its function is as follows. Involved in the biosynthesis of caffeine. Catalyzes the conversion of 7-methylxanthine (7mX) to theobromine and of paraxanthine to caffeine. In Coffea canephora (Robusta coffee), this protein is 7-methylxanthine methyltransferase 1.